We begin with the raw amino-acid sequence, 836 residues long: Periostin (836 aa).

A signal peptide spans 1–21; the sequence is MIPFLPMFSLLLLLIVNPINA. Residues 40–94 form the EMI domain; that stretch reads GPNVCALQQILGTKKKYFSTCKNWYKKSICGQKTTVLYECCPGYMRMEGMKGCPA. Cystine bridges form between C44-C80, C69-C333, C79-C92, C208-C311, and C467-C472. C60 carries the post-translational modification S-cysteinyl cysteine. 4 FAS1 domains span residues 97–230, 234–365, 368–492, and 496–628; these read PIDH…DRVL, GTSI…DQVL, DSAK…REII, and EKSL…DKLL. N-linked (GlcNAc...) asparagine glycosylation occurs at N599.

As to quaternary structure, homodimer. Interacts with BMP1 and fibronectin. Gamma-carboxylation is controversial. Gamma-carboxyglutamated; gamma-carboxyglutamate residues are formed by vitamin K dependent carboxylation; this may be required for calcium binding. According to a more recent report, does not contain vitamin K-dependent gamma-carboxyglutamate residues. As to expression, widely expressed with highest levels in aorta, stomach, lower gastrointestinal tract, placenta, uterus, thyroid tissue and breast. Expressed in the kidney. Expressed in the lung. Up-regulated in epithelial ovarian tumors. Not expressed in normal ovaries. Also highly expressed at the tumor periphery of lung carcinoma tissue but not within the tumor. Overexpressed in breast cancers.

It is found in the golgi apparatus. The protein localises to the secreted. It localises to the extracellular space. The protein resides in the extracellular matrix. Its function is as follows. Induces cell attachment and spreading and plays a role in cell adhesion. Enhances incorporation of BMP1 in the fibronectin matrix of connective tissues, and subsequent proteolytic activation of lysyl oxidase LOX. The polypeptide is Periostin (POSTN) (Homo sapiens (Human)).